The primary structure comprises 408 residues: Peptidase T (408 aa).

H79 is a binding site for Zn(2+). The active site involves D81. Residue D139 coordinates Zn(2+). E173 acts as the Proton acceptor in catalysis. E174, D196, and H378 together coordinate Zn(2+).

It belongs to the peptidase M20B family. It depends on Zn(2+) as a cofactor.

The protein resides in the cytoplasm. The enzyme catalyses Release of the N-terminal residue from a tripeptide.. Cleaves the N-terminal amino acid of tripeptides. In Shouchella clausii (strain KSM-K16) (Alkalihalobacillus clausii), this protein is Peptidase T.